Consider the following 493-residue polypeptide: Accumulates dyads protein 4 (493 aa).

Interacts with CNM67, SPO21/MPC70 and NUD1.

The protein resides in the cytoplasm. It is found in the cytoskeleton. It localises to the microtubule organizing center. Its subcellular location is the spindle pole body. In terms of biological role, involved in the pathway that organizes the shaping and sizing of the prospore membrane (PSM) during sporulation. May be required to stabilize the outer plaque of the spindle pole body (SPB). This chain is Accumulates dyads protein 4 (ADY4), found in Saccharomyces cerevisiae (strain ATCC 204508 / S288c) (Baker's yeast).